A 220-amino-acid chain; its full sequence is uncharacterized protein (220 aa).

This is an uncharacterized protein from Schizosaccharomyces pombe (strain 972 / ATCC 24843) (Fission yeast).